A 219-amino-acid polypeptide reads, in one-letter code: MKLLLWACIVCVAFARKRRFPFIGEDDNDDGHPLHPSLNIPYGIRNLPPPLYYRPVNTVPSYPGNTYTDTGLPSYPWILTSPGFPYVYHIRGFPLATQLNVPPLPPRGFPFVPPSRFFSAAAAPAAPPIAAEPAAAAPLTATPVAAEPAAGAPVAAEPAAEAPVGAEPAAEAPVAAEPAAEAPVGVEPAAEEPSPAEPATAKPAAPEPHPSPSLEQANQ.

An N-terminal signal peptide occupies residues 1–15; it reads MKLLLWACIVCVAFA. The segment covering 155–204 has biased composition (low complexity); that stretch reads AAEPAAEAPVGAEPAAEAPVAAEPAAEAPVGVEPAAEEPSPAEPATAKPA. A disordered region spans residues 155-219; the sequence is AAEPAAEAPV…PSPSLEQANQ (65 aa).

It localises to the secreted. This is Proline-rich protein 27 (PRR27) from Homo sapiens (Human).